Here is a 450-residue protein sequence, read N- to C-terminus: Putative zinc metalloprotease TP_0600 (450 aa).

His-18 is a binding site for Zn(2+). The active site involves Glu-19. Residue His-22 participates in Zn(2+) binding. The helical transmembrane segment at Ile-102 to Leu-124 threads the bilayer. Positions Thr-200 to Gly-278 constitute a PDZ domain. The next 2 helical transmembrane spans lie at Val-384–Phe-406 and Val-421–Asn-443.

This sequence belongs to the peptidase M50B family. Requires Zn(2+) as cofactor.

It is found in the cell inner membrane. The chain is Putative zinc metalloprotease TP_0600 from Treponema pallidum (strain Nichols).